Here is a 30-residue protein sequence, read N- to C-terminus: Cyclotide cter-Q (30 aa).

The segment at residues 1-30 is a cross-link (cyclopeptide (Gly-Asn)); the sequence is GIPCGESCVFIPCISTVIGCSCKNKVCYRN. Intrachain disulfides connect cysteine 4–cysteine 20, cysteine 8–cysteine 22, and cysteine 13–cysteine 27.

This is a cyclic peptide.

The protein resides in the secreted. Its function is as follows. Probably participates in a plant defense mechanism. This is Cyclotide cter-Q from Clitoria ternatea (Butterfly pea).